Consider the following 348-residue polypeptide: Spore development regulator vosA (348 aa).

Residues 46–244 (ALSPSSCFLS…SDQGVRLRLR (199 aa)) enclose the Velvet domain. A disordered region spans residues 250-294 (MMSNKRSISGSGDLTSDQSQQQQQQQPLAKKRREDSVESANPSSL). Over residues 253–266 (NKRSISGSGDLTSD) the composition is skewed to polar residues. A Nuclear localization signal motif is present at residues 274–280 (QQPLAKK).

Belongs to the velvet family. VosA subfamily. In terms of assembly, forms a heterodimeric complex with VEL2; the formation of the VEL2-VOS1 complex is light-dependent.

The protein resides in the nucleus. Its function is as follows. Component of the velB-VosA heterodimeric complex that plays a dual role in activating genes associated with spore maturation and repressing certain development-associated genes. The complex binds DNA through the DNA-binding domain of vosA that recognizes an 11-nucleotide consensus sequence 5'-CTGGCCGCGGC-3' consisting of two motifs in the promoters of key developmental regulatory genes. Regulates spore viability, trehalose accumulation, and tolerance to thermal and oxidative as well as ion stresses. Positively regulates conidial pigmentation and pathogenicity on barley. The polypeptide is Spore development regulator vosA (Cochliobolus sativus (strain ND90Pr / ATCC 201652) (Common root rot and spot blotch fungus)).